The following is a 2210-amino-acid chain: RNA-directed RNA polymerase L (2210 aa).

The segment at 26–284 (KDAFLSHCHS…KHEDNTTSDC (259 aa)) is endonuclease. Mn(2+) is bound by residues E51, D89, and E102. Residue K115 is part of the active site. Residues 1172 to 1368 (CDMKLAVNNG…YLSSKLNKFV (197 aa)) enclose the RdRp catalytic domain. D1330 serves as a coordination point for Mg(2+).

This sequence belongs to the Bunyavirales RNA polymerase family. As to quaternary structure, homomultimer; the oligomeric structure is essential for the polymerase activity. Interacts with nucleoprotein N. Interacts with protein Z; this interaction inhibits viral transcription and replication, Z partially blocks the product exit tunnel for the releasing nascent RNA product. Mn(2+) is required as a cofactor. It depends on Mg(2+) as a cofactor.

The protein localises to the virion. Its subcellular location is the host cytoplasm. The catalysed reaction is RNA(n) + a ribonucleoside 5'-triphosphate = RNA(n+1) + diphosphate. Its function is as follows. RNA-dependent RNA polymerase, which is responsible for the replication and transcription of the viral RNA genome using antigenomic RNA as an intermediate. During transcription, synthesizes subgenomic RNAs and assures their capping by a cap-snatching mechanism, which involves the endonuclease activity cleaving the host capped pre-mRNAs. These short capped RNAs are then used as primers for viral transcription. The 3'-end of subgenomic mRNAs molecules are heterogeneous and not polyadenylated. The replicase function is to direct synthesis of antigenomic and genomic RNA which are encapsidated and non capped. As a consequence of the use of the same enzyme for both transcription and replication, these mechanisms need to be well coordinated. These processes may be regulated by proteins N and Z in a dose-dependent manner. Z protein inhibits the viral polymerase L und thus the viral transcription and RNA synthesis. The protein is RNA-directed RNA polymerase L of Tacaribe virus (strain Franze-Fernandez) (TCRV).